Here is a 392-residue protein sequence, read N- to C-terminus: MASVEEFRNAQRAKGPATILAIGTATPDHCVYQSDYADYYFRVTKSEHMTELKKKFNRICDKSMIKKRYIHLTEEMLEEHPNIGAYMAPSLNIRQEIITAEVPRLGRDAALKALKEWGQPKSKITHLVFCTTSGVEMPGADYKLANLLGLETSVRRVMLYHQGCYAGGTVLRTAKDLAENNAGARVLVVCSEITVVTFRGPSEDALDSLVGQALFGDGSSAVIVGSDPDVSIERPLFQLVSAAQTFIPNSAGAIAGNLREVGLTFHLWPNVPTLISENIEKCLTQAFDPLGISDWNSLFWIAHPGGPAILDAVEAKLNLEKKKLEATRHVLSEYGNMSSACVLFILDEMRKKSLKGEKATTGEGLDWGVLFGFGPGLTIETVVLHSVPTVTN.

55–58 provides a ligand contact to substrate; sequence KFNR. Residue cysteine 164 is part of the active site. Substrate contacts are provided by residues leucine 267 and 305 to 307; that span reads GGP.

The protein belongs to the thiolase-like superfamily. Chalcone/stilbene synthases family. In terms of assembly, homodimer. In leaves, expressed in palisade and spongy parenchyma cells and, to a lesser extent, in epidermal cells after induction.

The protein resides in the cytoplasm. The catalysed reaction is 4-coumaroyl-CoA + 3 malonyl-CoA + 3 H(+) = trans-resveratrol + 4 CO2 + 4 CoA. Its pathway is phytoalexin biosynthesis; 3,4',5-trihydroxystilbene biosynthesis; 3,4',5-trihydroxystilbene from trans-4-coumarate: step 2/2. Functionally, mediates resistance to pathogens which are sensitive to stilbenes such as Botrytis cinerea, Eutypa lata and Plasmopora viticola by enhancing the production of phytoalexins. Confers resistance to Phytophthora palmivora when expressed in papaya. This Vitis vinifera (Grape) protein is Stilbene synthase 1 (VINST1).